The sequence spans 103 residues: Large ribosomal subunit protein uL24 (103 aa).

Belongs to the universal ribosomal protein uL24 family. In terms of assembly, part of the 50S ribosomal subunit.

One of two assembly initiator proteins, it binds directly to the 5'-end of the 23S rRNA, where it nucleates assembly of the 50S subunit. Functionally, one of the proteins that surrounds the polypeptide exit tunnel on the outside of the subunit. The polypeptide is Large ribosomal subunit protein uL24 (Exiguobacterium sibiricum (strain DSM 17290 / CCUG 55495 / CIP 109462 / JCM 13490 / 255-15)).